Reading from the N-terminus, the 36-residue chain is Photosystem I reaction center subunit VIII (36 aa).

A helical membrane pass occupies residues 9–29 (ILVPLVGLIFPAIAMTSLFIY).

This sequence belongs to the PsaI family.

The protein resides in the plastid. It localises to the chloroplast thylakoid membrane. In terms of biological role, may help in the organization of the PsaL subunit. The sequence is that of Photosystem I reaction center subunit VIII from Tupiella akineta (Green alga).